The chain runs to 511 residues: 2-isopropylmalate synthase (511 aa).

Residues 6-269 (IIIFDTTLRD…YTDIKCENIS (264 aa)) form the Pyruvate carboxyltransferase domain. Mn(2+) contacts are provided by aspartate 15, histidine 203, histidine 205, and asparagine 239. Residues 394–511 (VLEKLSVISG…SLKVEERKMA (118 aa)) form a regulatory domain region.

The protein belongs to the alpha-IPM synthase/homocitrate synthase family. LeuA type 1 subfamily. As to quaternary structure, homodimer. It depends on Mn(2+) as a cofactor.

It localises to the cytoplasm. It catalyses the reaction 3-methyl-2-oxobutanoate + acetyl-CoA + H2O = (2S)-2-isopropylmalate + CoA + H(+). The protein operates within amino-acid biosynthesis; L-leucine biosynthesis; L-leucine from 3-methyl-2-oxobutanoate: step 1/4. Catalyzes the condensation of the acetyl group of acetyl-CoA with 3-methyl-2-oxobutanoate (2-ketoisovalerate) to form 3-carboxy-3-hydroxy-4-methylpentanoate (2-isopropylmalate). The chain is 2-isopropylmalate synthase from Campylobacter jejuni subsp. doylei (strain ATCC BAA-1458 / RM4099 / 269.97).